We begin with the raw amino-acid sequence, 318 residues long: Pantothenate kinase (318 aa).

96–103 (GSVAVGKS) is an ATP binding site.

The protein belongs to the prokaryotic pantothenate kinase family.

Its subcellular location is the cytoplasm. It carries out the reaction (R)-pantothenate + ATP = (R)-4'-phosphopantothenate + ADP + H(+). Its pathway is cofactor biosynthesis; coenzyme A biosynthesis; CoA from (R)-pantothenate: step 1/5. This chain is Pantothenate kinase, found in Rhodopseudomonas palustris (strain BisA53).